The following is a 719-amino-acid chain: NF-kappa-B inhibitor zeta (719 aa).

A compositionally biased stretch (low complexity) spans 46–81; that stretch reads GACDGGCSASGPSAPGSPGSDSSDFSSASSVSSCGA. A disordered region spans residues 46–97; that stretch reads GACDGGCSASGPSAPGSPGSDSSDFSSASSVSSCGAVESRPRGGARAERLQV. Residues 84–97 show a composition bias toward basic and acidic residues; that stretch reads SRPRGGARAERLQV. The region spanning 108–130 is the OCA domain; that stretch reads RGPFQGVRVKNSVKELLLHIRSH. Residues 164-179 carry the Nuclear localization signal motif; sequence KRKGSDSLSDGPACKR. 2 disordered regions span residues 188–210 and 289–343; these read LTPP…ESKQ and YSPQ…FAPL. Over residues 201-210 the composition is skewed to basic and acidic residues; that stretch reads EDVHHNESKQ. The tract at residues 322 to 394 is required for transcriptional activity; that stretch reads SYEPHLFGRE…LARPDASSTP (73 aa). The interaction with NFKB1/p50 stretch occupies residues 405–719; it reads GGNPMSTTQL…KSIQQRAPPY (315 aa). 7 ANK repeats span residues 444-473, 480-509, 513-542, 552-581, 583-608, 613-642, and 649-682; these read DGDT…ALHM, NGQS…QVNT, WGRT…GSNQ, DGLT…HSPE, QELL…AVEA, SGRT…CLSF, and NGNT…DPST.

In terms of assembly, interacts with NFKB1/p50. Interacts with RELA. Interacts with AKIRIN2.

Its subcellular location is the nucleus. In terms of biological role, involved in regulation of NF-kappa-B transcription factor complexes. Inhibits NF-kappa-B activity without affecting its nuclear translocation upon stimulation. Inhibits DNA-binding of RELA and NFKB1/p50, and of the NF-kappa-B p65-p50 heterodimer and the NF-kappa-B p50-p50 homodimer. Also seems to activate NF-kappa-B-mediated transcription. In vitro, upon association with NFKB1/p50 has transcriptional activation activity and, together with NFKB1/p50 and RELA, is recruited to LCN2 promoters. Promotes transcription of LCN2 and DEFB4. Is recruited to IL-6 promoters and activates IL-6 but decreases TNF-alpha production in response to LPS. Seems to be involved in the induction of inflammatory genes activated through TLR/IL-1 receptor signaling. Involved in the induction of T helper 17 cells (Th17) differentiation upon recognition of antigen by T cell antigen receptor (TCR). This is NF-kappa-B inhibitor zeta (NFKBIZ) from Bos taurus (Bovine).